The primary structure comprises 302 residues: 33 kDa chaperonin (302 aa).

2 cysteine pairs are disulfide-bonded: C234–C236 and C267–C270.

This sequence belongs to the HSP33 family. Under oxidizing conditions two disulfide bonds are formed involving the reactive cysteines. Under reducing conditions zinc is bound to the reactive cysteines and the protein is inactive.

It localises to the cytoplasm. Functionally, redox regulated molecular chaperone. Protects both thermally unfolding and oxidatively damaged proteins from irreversible aggregation. Plays an important role in the bacterial defense system toward oxidative stress. The protein is 33 kDa chaperonin of Neisseria meningitidis serogroup A / serotype 4A (strain DSM 15465 / Z2491).